The primary structure comprises 461 residues: Chromosomal replication initiator protein DnaA (461 aa).

The interval 1-83 is domain I, interacts with DnaA modulators; that stretch reads MTASLWQQCL…LHFAVGRRPT (83 aa). The segment at 83–124 is domain II; it reads TAATVQMNTAAAPVADVRIGPAITVPSWTSKQDAMPEINHKS. The segment at 125 to 341 is domain III, AAA+ region; it reads NINETYTFEN…GALNRVIANA (217 aa). ATP-binding residues include Gly-169, Gly-171, Lys-172, and Thr-173. The segment at 342 to 461 is domain IV, binds dsDNA; it reads RFTGKPINID…YSNLIRTLSS (120 aa).

It belongs to the DnaA family. As to quaternary structure, oligomerizes as a right-handed, spiral filament on DNA at oriC.

The protein resides in the cytoplasm. In terms of biological role, plays an essential role in the initiation and regulation of chromosomal replication. ATP-DnaA binds to the origin of replication (oriC) to initiate formation of the DNA replication initiation complex once per cell cycle. Binds the DnaA box (a 9 base pair repeat at the origin) and separates the double-stranded (ds)DNA. Forms a right-handed helical filament on oriC DNA; dsDNA binds to the exterior of the filament while single-stranded (ss)DNA is stabiized in the filament's interior. The ATP-DnaA-oriC complex binds and stabilizes one strand of the AT-rich DNA unwinding element (DUE), permitting loading of DNA polymerase. After initiation quickly degrades to an ADP-DnaA complex that is not apt for DNA replication. Binds acidic phospholipids. The chain is Chromosomal replication initiator protein DnaA from Tolumonas auensis (strain DSM 9187 / NBRC 110442 / TA 4).